We begin with the raw amino-acid sequence, 344 residues long: Flavonoid 7-O-methyltransferase 1B (344 aa).

Aspartate 211 lines the S-adenosyl-L-methionine pocket. Catalysis depends on histidine 249, which acts as the Proton acceptor.

It belongs to the class I-like SAM-binding methyltransferase superfamily. Cation-independent O-methyltransferase family. In terms of assembly, homodimer.

It catalyses the reaction scutellarein + S-adenosyl-L-methionine = scutellarein 7-methyl ether + S-adenosyl-L-homocysteine. It carries out the reaction 4',7,8-trihydroxyflavone + S-adenosyl-L-methionine = 4',8-dihydroxy-7-methoxyflavone + S-adenosyl-L-homocysteine. The catalysed reaction is isorhamnetin + S-adenosyl-L-methionine = rhamnacene + S-adenosyl-L-homocysteine + H(+). The enzyme catalyses kaempferol + S-adenosyl-L-methionine = kaempferol 7-methyl ether + S-adenosyl-L-homocysteine + H(+). It catalyses the reaction (2S)-naringenin + S-adenosyl-L-methionine = (2S)-sakuranetin + S-adenosyl-L-homocysteine + H(+). It carries out the reaction quercetin + S-adenosyl-L-methionine = rhamnetin + S-adenosyl-L-homocysteine + H(+). The catalysed reaction is apigenin + S-adenosyl-L-methionine = genkwanin + S-adenosyl-L-homocysteine + H(+). The enzyme catalyses luteolin + S-adenosyl-L-methionine = luteolin 7-methyl ether + S-adenosyl-L-homocysteine + H(+). It participates in flavonoid metabolism. In terms of biological role, flavonoid 7-O-methyltransferase involved in the biosynthesis of polymethoxylated flavonoids natural products such as pebrellin, aroma compounds which contribute to the flavor of peppermint, and exhibit pharmacological activities such as anti-allergic, anti-oxidant, antibacterial, anti-proliferative, and anti-inflammatory effects. Catalyzes S-adenosylmethionine-dependent regioselective 7-O-methylation of flavonoids; active on various hydroxylated flavonoid substrates, including luteolin (LUT), quercetin, kaempferol, isorhamnetin, apigenin (API), scutellarein (6-hydroxy-apigenin, 6-OH-API, SCU), 7,8,4'-trihydroxy-flavone and naringenin (NAR), and, with a lower efficiency, 7,8,3',4'-tetrahydroxy-flavone, taxifolin and hesperetin. The sequence is that of Flavonoid 7-O-methyltransferase 1B from Mentha piperita (Peppermint).